Reading from the N-terminus, the 183-residue chain is tRNA-splicing endonuclease (183 aa).

Active-site residues include Y120, H128, and K159.

It belongs to the tRNA-intron endonuclease family. Archaeal short subfamily. Homotetramer; although the tetramer contains four active sites, only two participate in the cleavage. Therefore, it should be considered as a dimer of dimers.

The enzyme catalyses pretRNA = a 3'-half-tRNA molecule with a 5'-OH end + a 5'-half-tRNA molecule with a 2',3'-cyclic phosphate end + an intron with a 2',3'-cyclic phosphate and a 5'-hydroxyl terminus.. Functionally, endonuclease that removes tRNA introns. Cleaves pre-tRNA at the 5'- and 3'-splice sites to release the intron. The products are an intron and two tRNA half-molecules bearing 2',3' cyclic phosphate and 5'-OH termini. Recognizes a pseudosymmetric substrate in which 2 bulged loops of 3 bases are separated by a stem of 4 bp. The sequence is that of tRNA-splicing endonuclease from Pyrobaculum aerophilum (strain ATCC 51768 / DSM 7523 / JCM 9630 / CIP 104966 / NBRC 100827 / IM2).